The sequence spans 331 residues: MTTGPFVPHPTLDPKSLGKVGVILGGRSAEREISLLSGNGVLAALRSRGVDAHPFDPGTQPVAGLAAQGFHRVVISLHGRFGEDGTIQGLLEQFGIPYTGSGVLASALAMDKEATKRLWQTHSLPTPDFVMLHAGADWQAVADRLGLPLIVKPAREGSSIGLTKVTSVAELPAAYEKAARLDRDVMAEQFIDGDELTCAVIGEGEHATALPLIRIVAPQANYDYQHKYFTDDTRYECPAPIPAEAAARVQALVVQAYRSLGCRGWGRADIMLRKHDGAPFLLEMNTSPGMTGHSLVPMAARAVGISYEDFVLQLAATASLELRASHDWKPE.

The region spanning Lys116–Ala316 is the ATP-grasp domain. Residue Ala142–Thr197 coordinates ATP. Residues Asp269, Glu283, and Asn285 each coordinate Mg(2+).

The protein belongs to the D-alanine--D-alanine ligase family. Mg(2+) is required as a cofactor. It depends on Mn(2+) as a cofactor.

It is found in the cytoplasm. The catalysed reaction is 2 D-alanine + ATP = D-alanyl-D-alanine + ADP + phosphate + H(+). Its pathway is cell wall biogenesis; peptidoglycan biosynthesis. In terms of biological role, cell wall formation. The sequence is that of D-alanine--D-alanine ligase from Ralstonia nicotianae (strain ATCC BAA-1114 / GMI1000) (Ralstonia solanacearum).